Reading from the N-terminus, the 122-residue chain is Large ribosomal subunit protein bL19c (122 aa).

The protein belongs to the bacterial ribosomal protein bL19 family.

Its subcellular location is the plastid. The protein localises to the chloroplast. The protein is Large ribosomal subunit protein bL19c of Gracilaria tenuistipitata var. liui (Red alga).